The following is a 400-amino-acid chain: MGAPLSTARRGMGQNLSVPNPLGFFPDHQLDPLFRANSSSPDWDFNTNKDNWPMANKVGVGGFGPGFTPPHGGLLGWSPQAQGILTTSPPDPPPASTNRRSGRKPTPVSPPLRDTHPQAMQWNSTQFHQALLDPRVRGLYFPAGGSSSETQNPAPTIASLTSSIFSKTGDPAMNMENITSGLLRPLLVLQAVCFLLTKILTIPQSLDSWWTSLNFLGVPPGCPGQNSQSPISNHLPTSCPPTCPGYRWMCLRRFIIFLFILLLCLIFLLVLLDYQGMLPVCPLLPGSTTTSTGPCKTCTTLAQGTSMFPSCCCTKPSDGNCTCIPIPSSWAFGKYLWEWASARFSWLSLLVQFVQWCVGLSPTVWLLVIWMIWYWGPNLCSILSPFIPLLPIFCYLWASI.

Residue Met-1 is modified to N-acetylmethionine. A lipid anchor (N-myristoyl glycine; by host) is attached at Gly-2. Residues Gly-2 to Ala-119 are pre-S1. Residues Gly-2–Asn-174 are pre-S. Residues Gly-2–Gly-181 are Virion surface; in external conformation-facing. Over Gly-2–Arg-253 the chain is Intravirion; in internal conformation. N-linked (GlcNAc...) asparagine glycosylation occurs at Pro-4. The interval Pro-70 to Thr-115 is disordered. The span at Pro-79–Ser-88 shows a compositional bias: polar residues. The pre-S2 stretch occupies residues Met-120 to Asn-174. The helical transmembrane segment at Leu-182–Ile-202 threads the bilayer. Residues Pro-203–Arg-253 lie on the Intravirion; in external conformation side of the membrane. The helical transmembrane segment at Phe-254 to Tyr-274 threads the bilayer. Topologically, residues Gln-275–Ser-348 are virion surface. An N-linked (GlcNAc...) asparagine; by host glycan is attached at Asn-320. A helical membrane pass occupies residues Leu-349–Ile-369. Over Trp-370–Trp-375 the chain is Intravirion. A helical membrane pass occupies residues Gly-376–Ala-398. Residues Ser-399–Ile-400 are Virion surface-facing.

This sequence belongs to the orthohepadnavirus major surface antigen family. In terms of assembly, in its internal form (Li-HBsAg), interacts with the capsid protein and with the isoform S. Interacts with host chaperone CANX. As to quaternary structure, associates with host chaperone CANX through its pre-S2 N glycan; this association may be essential for isoform M proper secretion. Interacts with isoform L. Interacts with the antigens of satellite virus HDV (HDVAgs); this interaction is required for encapsidation of HDV genomic RNA. Post-translationally, isoform M is N-terminally acetylated by host at a ratio of 90%, and N-glycosylated by host at the pre-S2 region. In terms of processing, myristoylated.

It localises to the virion membrane. In terms of biological role, the large envelope protein exists in two topological conformations, one which is termed 'external' or Le-HBsAg and the other 'internal' or Li-HBsAg. In its external conformation the protein attaches the virus to cell receptors and thereby initiating infection. This interaction determines the species specificity and liver tropism. This attachment induces virion internalization predominantly through caveolin-mediated endocytosis. The large envelope protein also assures fusion between virion membrane and endosomal membrane. In its internal conformation the protein plays a role in virion morphogenesis and mediates the contact with the nucleocapsid like a matrix protein. Its function is as follows. The middle envelope protein plays an important role in the budding of the virion. It is involved in the induction of budding in a nucleocapsid independent way. In this process the majority of envelope proteins bud to form subviral lipoprotein particles of 22 nm of diameter that do not contain a nucleocapsid. The polypeptide is Large envelope protein (Hepatitis B virus genotype H (isolate United States/LAS2523/2002) (HBV-H)).